The primary structure comprises 296 residues: Protoheme IX farnesyltransferase (296 aa).

The Cytoplasmic portion of the chain corresponds to 1-9 (MMFKQYLQV). A helical transmembrane segment spans residues 10-28 (TKPGIIFGNLISVIGGFLL). Residues 29-37 (ASKGSIDYP) are Periplasmic-facing. Residues 38–56 (LFIYTLVGVSLVVASGCVF) traverse the membrane as a helical segment. Over 57–78 (NNYIDRDIDRKMERTKNRVLVK) the chain is Cytoplasmic. A helical membrane pass occupies residues 79–97 (GLISPAVSLVYATLLGIAG). The Periplasmic portion of the chain corresponds to 98–107 (FMLLWFGANP). A helical membrane pass occupies residues 108–126 (LACWLGVMGFVVYVGVYSL). The Cytoplasmic portion of the chain corresponds to 127–197 (YMKRHSVYGT…YQAANIPVLP (71 aa)). Residues 198 to 216 (VVKGISVAKNHITLYIIAF) form a helical membrane-spanning segment. The Periplasmic portion of the chain corresponds to 217–228 (AVATLMLSLGGY). A helical transmembrane segment spans residues 229–247 (AGYKYLVVAAAVSVWWLGM). The Cytoplasmic portion of the chain corresponds to 248 to 268 (ALRGYKVADDRIWARKLFGFS). Residues 269 to 287 (IIAITALSVMMSVDFMVPD) form a helical membrane-spanning segment. The Periplasmic portion of the chain corresponds to 288 to 296 (SHTLLAAVW).

It belongs to the UbiA prenyltransferase family. Protoheme IX farnesyltransferase subfamily.

Its subcellular location is the cell inner membrane. It catalyses the reaction heme b + (2E,6E)-farnesyl diphosphate + H2O = Fe(II)-heme o + diphosphate. It participates in porphyrin-containing compound metabolism; heme O biosynthesis; heme O from protoheme: step 1/1. Its function is as follows. Converts heme B (protoheme IX) to heme O by substitution of the vinyl group on carbon 2 of heme B porphyrin ring with a hydroxyethyl farnesyl side group. This Escherichia coli O139:H28 (strain E24377A / ETEC) protein is Protoheme IX farnesyltransferase.